Reading from the N-terminus, the 226-residue chain is Enolase-phosphatase E1 (226 aa).

Belongs to the HAD-like hydrolase superfamily. MasA/MtnC family. As to quaternary structure, monomer. It depends on Mg(2+) as a cofactor.

The enzyme catalyses 5-methylsulfanyl-2,3-dioxopentyl phosphate + H2O = 1,2-dihydroxy-5-(methylsulfanyl)pent-1-en-3-one + phosphate. It participates in amino-acid biosynthesis; L-methionine biosynthesis via salvage pathway; L-methionine from S-methyl-5-thio-alpha-D-ribose 1-phosphate: step 3/6. Its pathway is amino-acid biosynthesis; L-methionine biosynthesis via salvage pathway; L-methionine from S-methyl-5-thio-alpha-D-ribose 1-phosphate: step 4/6. Functionally, bifunctional enzyme that catalyzes the enolization of 2,3-diketo-5-methylthiopentyl-1-phosphate (DK-MTP-1-P) into the intermediate 2-hydroxy-3-keto-5-methylthiopentenyl-1-phosphate (HK-MTPenyl-1-P), which is then dephosphorylated to form the acireductone 1,2-dihydroxy-3-keto-5-methylthiopentene (DHK-MTPene). The polypeptide is Enolase-phosphatase E1 (Shewanella baltica (strain OS155 / ATCC BAA-1091)).